Here is a 264-residue protein sequence, read N- to C-terminus: Thymidylate synthase (264 aa).

Arginine 21 contributes to the dUMP binding site. (6R)-5,10-methylene-5,6,7,8-tetrahydrofolate is bound at residue histidine 51. 126 to 127 (RR) contacts dUMP. Cysteine 146 (nucleophile) is an active-site residue. Residues 166–169 (RSAD), asparagine 177, and 207–209 (HLY) contribute to the dUMP site. Residue aspartate 169 coordinates (6R)-5,10-methylene-5,6,7,8-tetrahydrofolate. Serine 263 is a (6R)-5,10-methylene-5,6,7,8-tetrahydrofolate binding site.

The protein belongs to the thymidylate synthase family. Bacterial-type ThyA subfamily. Homodimer.

The protein localises to the cytoplasm. It carries out the reaction dUMP + (6R)-5,10-methylene-5,6,7,8-tetrahydrofolate = 7,8-dihydrofolate + dTMP. It participates in pyrimidine metabolism; dTTP biosynthesis. Catalyzes the reductive methylation of 2'-deoxyuridine-5'-monophosphate (dUMP) to 2'-deoxythymidine-5'-monophosphate (dTMP) while utilizing 5,10-methylenetetrahydrofolate (mTHF) as the methyl donor and reductant in the reaction, yielding dihydrofolate (DHF) as a by-product. This enzymatic reaction provides an intracellular de novo source of dTMP, an essential precursor for DNA biosynthesis. This is Thymidylate synthase from Neisseria gonorrhoeae (strain ATCC 700825 / FA 1090).